The primary structure comprises 228 residues: Cytidylate kinase (228 aa).

Residue 17-25 participates in ATP binding; the sequence is GPSASGKGT.

This sequence belongs to the cytidylate kinase family. Type 1 subfamily.

The protein localises to the cytoplasm. The enzyme catalyses CMP + ATP = CDP + ADP. It carries out the reaction dCMP + ATP = dCDP + ADP. The polypeptide is Cytidylate kinase (Paraburkholderia xenovorans (strain LB400)).